A 305-amino-acid chain; its full sequence is Ribonucleoside-diphosphate reductase small subunit (305 aa).

Fe cation contacts are provided by Glu64, Glu94, and His97. Tyr101 is a catalytic residue. Residues 150 to 170 (ILMFLIVEGIYFISSFYSISL) traverse the membrane as a helical segment. Fe cation-binding residues include Glu157, Glu191, and His194.

The protein belongs to the ribonucleoside diphosphate reductase small chain family. Heterotetramer composed of a homodimer of the large subunit (R1) and a homodimer of the small subunit (R2). Larger multisubunit protein complex are also active, composed of (R1)n(R2)n. The cofactor is Fe cation.

Its subcellular location is the host membrane. It catalyses the reaction a 2'-deoxyribonucleoside 5'-diphosphate + [thioredoxin]-disulfide + H2O = a ribonucleoside 5'-diphosphate + [thioredoxin]-dithiol. In terms of biological role, ribonucleoside-diphosphate reductase holoenzyme provides the precursors necessary for viral DNA synthesis. Allows virus growth in non-dividing cells, as well as reactivation from latency in infected hosts. Catalyzes the biosynthesis of deoxyribonucleotides from the corresponding ribonucleotides. This Homo sapiens (Human) protein is Ribonucleoside-diphosphate reductase small subunit.